A 371-amino-acid chain; its full sequence is Enoyl-[acyl-carrier-protein] reductase [NADH] 2, chloroplastic (371 aa).

The transit peptide at 1-67 directs the protein to the chloroplast; sequence MGASVTTGLQ…SLNHKRFAVR (67 aa). NAD(+) contacts are provided by residues Gly-87, Tyr-94, 151–152, 198–199, and Leu-248; these read DA and SL. Catalysis depends on proton acceptor residues Tyr-250 and Tyr-260. Residues Lys-268 and 298–302 contribute to the NAD(+) site; that span reads LGSRA.

This sequence belongs to the short-chain dehydrogenases/reductases (SDR) family. FabI subfamily. As to quaternary structure, homotetramer.

The protein localises to the plastid. Its subcellular location is the chloroplast. It catalyses the reaction a 2,3-saturated acyl-[ACP] + NAD(+) = a (2E)-enoyl-[ACP] + NADH + H(+). It participates in lipid metabolism; fatty acid biosynthesis. Catalyzes the NAD-dependent reduction of a carbon-carbon double bond in an enoyl moiety that is covalently linked to an acyl carrier protein (ACP). Catalyzes the last reduction step in the de novo synthesis cycle of fatty acids. Involved in the elongation cycle of fatty acids which are used in lipid metabolism. Required for normal plant growth. This chain is Enoyl-[acyl-carrier-protein] reductase [NADH] 2, chloroplastic, found in Oryza sativa subsp. japonica (Rice).